We begin with the raw amino-acid sequence, 191 residues long: Orotate phosphoribosyltransferase (191 aa).

114-122 (EDVVTTGKS) contacts 5-phospho-alpha-D-ribose 1-diphosphate. Positions 118 and 146 each coordinate orotate.

It belongs to the purine/pyrimidine phosphoribosyltransferase family. PyrE subfamily. In terms of assembly, homodimer. It depends on Mg(2+) as a cofactor.

The catalysed reaction is orotidine 5'-phosphate + diphosphate = orotate + 5-phospho-alpha-D-ribose 1-diphosphate. It functions in the pathway pyrimidine metabolism; UMP biosynthesis via de novo pathway; UMP from orotate: step 1/2. In terms of biological role, catalyzes the transfer of a ribosyl phosphate group from 5-phosphoribose 1-diphosphate to orotate, leading to the formation of orotidine monophosphate (OMP). This Clostridium botulinum (strain ATCC 19397 / Type A) protein is Orotate phosphoribosyltransferase.